A 436-amino-acid chain; its full sequence is Histidinol dehydrogenase (436 aa).

The NAD(+) site is built by Tyr-136, Gln-198, and Asn-221. The substrate site is built by Ser-244, Gln-266, and His-269. Residues Gln-266 and His-269 each coordinate Zn(2+). Catalysis depends on proton acceptor residues Glu-334 and His-335. Substrate contacts are provided by His-335, Asp-368, Glu-422, and His-427. Zn(2+) is bound at residue Asp-368. His-427 is a binding site for Zn(2+).

Belongs to the histidinol dehydrogenase family. Requires Zn(2+) as cofactor.

The catalysed reaction is L-histidinol + 2 NAD(+) + H2O = L-histidine + 2 NADH + 3 H(+). Its pathway is amino-acid biosynthesis; L-histidine biosynthesis; L-histidine from 5-phospho-alpha-D-ribose 1-diphosphate: step 9/9. In terms of biological role, catalyzes the sequential NAD-dependent oxidations of L-histidinol to L-histidinaldehyde and then to L-histidine. This Dehalococcoides mccartyi (strain ATCC BAA-2266 / KCTC 15142 / 195) (Dehalococcoides ethenogenes (strain 195)) protein is Histidinol dehydrogenase.